A 528-amino-acid chain; its full sequence is Probable serine/threonine-protein kinase 380R (528 aa).

The segment at 70 to 96 (VKIPKSKSPPKVKSPKRKKSPVRRRVS) is disordered. Basic residues predominate over residues 73–95 (PKSKSPPKVKSPKRKKSPVRRRV). One can recognise a Protein kinase domain in the interval 156–507 (FTNVKAVGKG…LANVLIHKIF (352 aa)). ATP is bound by residues 162–170 (VGKGSFGTV) and Lys-187. The active-site Proton acceptor is the Asp-302.

The protein belongs to the protein kinase superfamily. Ser/Thr protein kinase family.

It catalyses the reaction L-seryl-[protein] + ATP = O-phospho-L-seryl-[protein] + ADP + H(+). The enzyme catalyses L-threonyl-[protein] + ATP = O-phospho-L-threonyl-[protein] + ADP + H(+). This Invertebrate iridescent virus 6 (IIV-6) protein is Probable serine/threonine-protein kinase 380R.